Consider the following 253-residue polypeptide: Small ribosomal subunit protein eS6 (253 aa).

Residues 200-253 (KKRLAKRKQSENDYAKLLAQRKKESKVRRQEELKRRRSASMRDSKSSDKSAPQK) form a disordered region. Residues 226 to 247 (VRRQEELKRRRSASMRDSKSSD) are compositionally biased toward basic and acidic residues.

Belongs to the eukaryotic ribosomal protein eS6 family. Component of the small ribosomal subunit. Part of the small subunit (SSU) processome, composed of more than 70 proteins and the RNA chaperone small nucleolar RNA (snoRNA) U3. In terms of processing, ribosomal protein S6 is the major substrate of protein kinases in eukaryote ribosomes.

It is found in the cytoplasm. The protein resides in the nucleus. Its subcellular location is the nucleolus. Functionally, component of the 40S small ribosomal subunit. Plays an important role in controlling cell growth and proliferation through the selective translation of particular classes of mRNA. Part of the small subunit (SSU) processome, first precursor of the small eukaryotic ribosomal subunit. During the assembly of the SSU processome in the nucleolus, many ribosome biogenesis factors, an RNA chaperone and ribosomal proteins associate with the nascent pre-rRNA and work in concert to generate RNA folding, modifications, rearrangements and cleavage as well as targeted degradation of pre-ribosomal RNA by the RNA exosome. This chain is Small ribosomal subunit protein eS6 (RpS6), found in Spodoptera frugiperda (Fall armyworm).